Here is a 118-residue protein sequence, read N- to C-terminus: Ribonuclease P protein component (118 aa).

It belongs to the RnpA family. As to quaternary structure, consists of a catalytic RNA component (M1 or rnpB) and a protein subunit.

It carries out the reaction Endonucleolytic cleavage of RNA, removing 5'-extranucleotides from tRNA precursor.. Functionally, RNaseP catalyzes the removal of the 5'-leader sequence from pre-tRNA to produce the mature 5'-terminus. It can also cleave other RNA substrates such as 4.5S RNA. The protein component plays an auxiliary but essential role in vivo by binding to the 5'-leader sequence and broadening the substrate specificity of the ribozyme. In Rickettsia conorii (strain ATCC VR-613 / Malish 7), this protein is Ribonuclease P protein component.